The primary structure comprises 348 residues: Selenide, water dikinase (348 aa).

The active site involves cysteine 17. ATP-binding positions include lysine 20 and 47 to 49 (THD). Residue aspartate 50 participates in Mg(2+) binding. ATP is bound by residues aspartate 67, aspartate 90, and 138-140 (GHT). Aspartate 90 lines the Mg(2+) pocket. Aspartate 226 provides a ligand contact to Mg(2+).

Belongs to the selenophosphate synthase 1 family. Class I subfamily. Homodimer. Mg(2+) is required as a cofactor.

It catalyses the reaction hydrogenselenide + ATP + H2O = selenophosphate + AMP + phosphate + 2 H(+). In terms of biological role, synthesizes selenophosphate from selenide and ATP. This is Selenide, water dikinase from Porphyromonas gingivalis (strain ATCC BAA-308 / W83).